The primary structure comprises 551 residues: Solute carrier family 22 member 4 (551 aa).

Over 1–20 the chain is Cytoplasmic; sequence MRDYDEAIAFLGEWGPFQRL. The chain crosses the membrane as a helical span at residues 21-41; that stretch reads IFFLLSASIIPNGFNGMSVVF. Residues 42–141 are Extracellular-facing; the sequence is LAGTPEHRCR…WNLVCEDNWK (100 aa). N-linked (GlcNAc...) asparagine glycosylation is found at Asn-57, Asn-64, and Asn-91. A helical transmembrane segment spans residues 142–162; it reads VPLTTSLFFVGVLLGSFVSGQ. At 163–171 the chain is on the cytoplasmic side; sequence LSDRFGRKN. Residues 172–192 form a helical membrane-spanning segment; that stretch reads VLFATMAVQTGFSFLQIFSIS. Over 193 to 197 the chain is Extracellular; sequence WEMFT. A helical membrane pass occupies residues 198–218; the sequence is VLFLIVGMGQISNYVVAFILG. Residue 218 to 225 coordinates ATP; sequence GTEILGKS. Residues 219–232 lie on the Cytoplasmic side of the membrane; it reads TEILGKSVRIIFST. A helical transmembrane segment spans residues 233-253; sequence LGVCTFFAVGYMLLPLFAYFI. At 254-257 the chain is on the extracellular side; that stretch reads RDWR. Residues 258-278 traverse the membrane as a helical segment; that stretch reads MLLLALTVPGVLCVPLWWFIP. Topologically, residues 279–337 are cytoplasmic; sequence ESPRWLISQRRFREAEDIIQKAAKMNNIAVPAVIFDSVEELNPLKQQKAFILDLFRTWN. A helical transmembrane segment spans residues 338-358; sequence IAIMTIMSLLLWMLTSVGYFA. Residues 359 to 371 are Extracellular-facing; the sequence is LSLDTPNLHGDAY. A helical membrane pass occupies residues 372–392; it reads LNCFLSALIEIPAYITAWLLL. The Cytoplasmic portion of the chain corresponds to 393–399; the sequence is RTLPRRY. Residues 400–420 form a helical membrane-spanning segment; it reads IIAAVLFWGGGVLLFIQLVPV. Over 421-426 the chain is Extracellular; that stretch reads DYYFLS. The chain crosses the membrane as a helical span at residues 427–447; sequence IGLVMLGKFGITSAFSMLYVF. Over 448 to 460 the chain is Cytoplasmic; the sequence is TAELYPTMVRNMA. A helical membrane pass occupies residues 461–481; that stretch reads VGVTSMASRVGSIIAPYFVYL. At 482-486 the chain is on the extracellular side; sequence GAYNR. The helical transmembrane segment at 487 to 507 threads the bilayer; it reads MLPYIVMGSLTVLIGILTLFF. Over 508 to 551 the chain is Cytoplasmic; that stretch reads PESLGMTLPETLEQMQKVKWFRSGKKTRDSMETEENPKVLITAF.

It belongs to the major facilitator (TC 2.A.1) superfamily. Organic cation transporter (TC 2.A.1.19) family. As to quaternary structure, interacts with PDZK1.

The protein resides in the apical cell membrane. Its subcellular location is the basal cell membrane. It is found in the mitochondrion membrane. The enzyme catalyses ergothioneine(out) + Na(+)(out) = ergothioneine(in) + Na(+)(in). The catalysed reaction is acetylcholine(in) = acetylcholine(out). It carries out the reaction (R)-carnitine(out) + Na(+)(out) = (R)-carnitine(in) + Na(+)(in). It catalyses the reaction glycine betaine(out) + Na(+)(out) = glycine betaine(in) + Na(+)(in). Its activity is regulated as follows. Allosterically activated by intracellular ATP. Functionally, transporter that mediates the transport of endogenous and microbial zwitterions and organic cations. Functions as a Na(+)-dependent and pH-dependent high affinity microbial symporter of potent food-derived antioxidant ergothioeine. Transports one sodium ion with one ergothioeine molecule. Involved in the absorption of ergothioneine from the luminal/apical side of the small intestine and renal tubular cells, and into non-parenchymal liver cells, thereby contributing to maintain steady-state ergothioneine level in the body. Also mediates the bidirectional transport of acetycholine, although the exact transport mechanism has not been fully identified yet. Most likely exports anti-inflammatory acetylcholine in non-neuronal tissues, thereby contributing to the non-neuronal cholinergic system. Displays a general physiological role linked to better survival by controlling inflammation and oxidative stress, which may be related to ergothioneine and acetycholine transports. May also function as a low-affinity Na(+)-dependent transporter of L-carnitine through the mitochondrial membrane, thereby maintaining intracellular carnitine homeostasis. May contribute to regulate the transport of cationic compounds in testis across the blood-testis-barrier. This Papio anubis (Olive baboon) protein is Solute carrier family 22 member 4 (SLC22A4).